Here is a 93-residue protein sequence, read N- to C-terminus: Conotoxin F_Vc1 (93 aa).

The signal sequence occupies residues 1–22; that stretch reads MQRGAVLLGVVAFLALWPQAGA. Positions 23–33 are excised as a propeptide; sequence EPYNLNDPDVR.

This sequence belongs to the conotoxin F superfamily. Contains 4 disulfide bonds. Expressed by the venom duct.

The protein resides in the secreted. In Conus victoriae (Queen Victoria cone), this protein is Conotoxin F_Vc1.